A 1071-amino-acid polypeptide reads, in one-letter code: Carbamoyl phosphate synthase large chain (1071 aa).

Positions 1–403 (MPKRTDLKSI…SFQKALRGLE (403 aa)) are carboxyphosphate synthetic domain. The ATP-grasp 1 domain maps to 133–328 (KEAMEKIGLS…IAKVAANWAV (196 aa)). 11 residues coordinate ATP: R169, G175, G176, Q208, V210, E215, G241, V242, H243, Q285, and E299. Q285, E299, and N301 together coordinate Mg(2+). Mn(2+)-binding residues include Q285, E299, and N301. The interval 404 to 548 (TGLCGFNPAR…YSTYEEECES (145 aa)) is oligomerization domain. The interval 549 to 930 (RPSDRKKVMI…AYYKAQLGAG (382 aa)) is carbamoyl phosphate synthetic domain. Residues 673–864 (QKVLNDLGLR…LAKVGARCMA (192 aa)) enclose the ATP-grasp 2 domain. Residues R709, F748, L750, E755, G780, I781, H782, S783, Q823, and E835 each coordinate ATP. Mg(2+)-binding residues include Q823, E835, and N837. Positions 823, 835, and 837 each coordinate Mn(2+). The MGS-like domain occupies 931-1071 (ERLNPTGKIF…ELHGRLKNRN (141 aa)). Residues 931 to 1071 (ERLNPTGKIF…ELHGRLKNRN (141 aa)) are allosteric domain.

It belongs to the CarB family. As to quaternary structure, composed of two chains; the small (or glutamine) chain promotes the hydrolysis of glutamine to ammonia, which is used by the large (or ammonia) chain to synthesize carbamoyl phosphate. Tetramer of heterodimers (alpha,beta)4. It depends on Mg(2+) as a cofactor. Requires Mn(2+) as cofactor.

The enzyme catalyses hydrogencarbonate + L-glutamine + 2 ATP + H2O = carbamoyl phosphate + L-glutamate + 2 ADP + phosphate + 2 H(+). It carries out the reaction hydrogencarbonate + NH4(+) + 2 ATP = carbamoyl phosphate + 2 ADP + phosphate + 2 H(+). It participates in amino-acid biosynthesis; L-arginine biosynthesis; carbamoyl phosphate from bicarbonate: step 1/1. It functions in the pathway pyrimidine metabolism; UMP biosynthesis via de novo pathway; (S)-dihydroorotate from bicarbonate: step 1/3. Its function is as follows. Large subunit of the glutamine-dependent carbamoyl phosphate synthetase (CPSase). CPSase catalyzes the formation of carbamoyl phosphate from the ammonia moiety of glutamine, carbonate, and phosphate donated by ATP, constituting the first step of 2 biosynthetic pathways, one leading to arginine and/or urea and the other to pyrimidine nucleotides. The large subunit (synthetase) binds the substrates ammonia (free or transferred from glutamine from the small subunit), hydrogencarbonate and ATP and carries out an ATP-coupled ligase reaction, activating hydrogencarbonate by forming carboxy phosphate which reacts with ammonia to form carbamoyl phosphate. This is Carbamoyl phosphate synthase large chain from Neisseria gonorrhoeae.